The primary structure comprises 343 residues: RNA-binding protein 43 (343 aa).

In terms of domain architecture, RRM spans 15–90 (RTVVVSGLPV…PRLTVSHFSE (76 aa)).

In Mus musculus (Mouse), this protein is RNA-binding protein 43 (Rbm43).